The sequence spans 1941 residues: Diacylglycerol kinase eta (1941 aa).

Residues 93–186 (SIIKEGYLLK…WLGSLKAATA (94 aa)) form the PH domain. Phorbol-ester/DAG-type zinc fingers lie at residues 206 to 256 (HHHW…IANC) and 279 to 330 (PHQW…AIAC). The 137-residue stretch at 361–497 (GNFSPLLVFV…DRWSIMVFEK (137 aa)) folds into the DAGKc domain. 4 disordered regions span residues 1030–1068 (TTTL…SPPR), 1132–1164 (CNSN…ETPT), 1215–1257 (LESA…PSSS), and 1276–1295 (RRHS…KDKD). The span at 1133–1155 (NSNNNSNNNSNSNSNNNNHNDGN) shows a compositional bias: low complexity. One can recognise an SAM domain in the interval 1878–1941 (WSVNEVVTWL…LQAIKDLSEN (64 aa)).

Belongs to the eukaryotic diacylglycerol kinase family.

Its subcellular location is the cytoplasm. The catalysed reaction is a 1,2-diacyl-sn-glycerol + ATP = a 1,2-diacyl-sn-glycero-3-phosphate + ADP + H(+). Phosphorylates diacylglycerol (DAG) to generate phosphatidic acid (PA). This is Diacylglycerol kinase eta from Drosophila grimshawi (Hawaiian fruit fly).